Consider the following 518-residue polypeptide: Sensor protein kinase HptS (518 aa).

2 helical membrane-spanning segments follow: residues I20–W40 and G222–I242. The 217-residue stretch at E297–R513 folds into the Histidine kinase domain. H325 bears the Phosphohistidine; by autocatalysis mark.

Post-translationally, autophosphorylated.

The protein localises to the cell membrane. The catalysed reaction is ATP + protein L-histidine = ADP + protein N-phospho-L-histidine.. In terms of biological role, member of the two-component regulatory system HptS/HptR that regulates genes involved in hexose phosphate transport system in response to changes in extracellular phosphate sources. May act as a sensor protein kinase which is autophosphorylated at a histidine residue and transfers its phosphate group to the conserved aspartic acid residue in the regulatory domain of HptS. In turn, HptS antagonizes CcpA-dependent transcription of a subset of CcpA-regulated genes involved in antibiotic susceptibility. This is Sensor protein kinase HptS (hptS) from Staphylococcus aureus (strain MRSA252).